Reading from the N-terminus, the 196-residue chain is Orotate phosphoribosyltransferase (196 aa).

A 5-phospho-alpha-D-ribose 1-diphosphate-binding site is contributed by 117–125 (EDVVTTGLS). 2 residues coordinate orotate: T121 and R149.

This sequence belongs to the purine/pyrimidine phosphoribosyltransferase family. PyrE subfamily. As to quaternary structure, homodimer. Mg(2+) is required as a cofactor.

It catalyses the reaction orotidine 5'-phosphate + diphosphate = orotate + 5-phospho-alpha-D-ribose 1-diphosphate. It functions in the pathway pyrimidine metabolism; UMP biosynthesis via de novo pathway; UMP from orotate: step 1/2. Functionally, catalyzes the transfer of a ribosyl phosphate group from 5-phosphoribose 1-diphosphate to orotate, leading to the formation of orotidine monophosphate (OMP). This Sphingopyxis alaskensis (strain DSM 13593 / LMG 18877 / RB2256) (Sphingomonas alaskensis) protein is Orotate phosphoribosyltransferase.